The primary structure comprises 329 residues: Beta-ketoacyl-[acyl-carrier-protein] synthase III (329 aa).

Catalysis depends on residues Cys113 and His255. The ACP-binding stretch occupies residues Gln256 to Arg260. Residue Asn285 is part of the active site.

Belongs to the thiolase-like superfamily. FabH family. In terms of assembly, homodimer.

The protein localises to the cytoplasm. It catalyses the reaction malonyl-[ACP] + acetyl-CoA + H(+) = 3-oxobutanoyl-[ACP] + CO2 + CoA. It functions in the pathway lipid metabolism; fatty acid biosynthesis. Functionally, catalyzes the condensation reaction of fatty acid synthesis by the addition to an acyl acceptor of two carbons from malonyl-ACP. Catalyzes the first condensation reaction which initiates fatty acid synthesis and may therefore play a role in governing the total rate of fatty acid production. Possesses both acetoacetyl-ACP synthase and acetyl transacylase activities. Its substrate specificity determines the biosynthesis of branched-chain and/or straight-chain of fatty acids. This Chlorobium chlorochromatii (strain CaD3) protein is Beta-ketoacyl-[acyl-carrier-protein] synthase III.